The primary structure comprises 461 residues: ADP-specific phosphofructokinase (461 aa).

The 457-residue stretch at 1-457 (MVRELLEKAR…FTSYLAMLKE (457 aa)) folds into the ADPK domain. Residues glutamate 268, glutamate 298, and aspartate 441 each coordinate Mg(2+). Aspartate 441 serves as the catalytic Proton acceptor.

It belongs to the carbohydrate kinase PfkC family. Requires Mg(2+) as cofactor.

The protein localises to the cytoplasm. The catalysed reaction is beta-D-fructose 6-phosphate + ADP = beta-D-fructose 1,6-bisphosphate + AMP + H(+). It functions in the pathway carbohydrate degradation; glycolysis. Its function is as follows. Catalyzes the phosphorylation of fructose 6-phosphate to fructose 1,6-bisphosphate using ADP as the phosphate donor. The polypeptide is ADP-specific phosphofructokinase (Thermococcus kodakarensis (strain ATCC BAA-918 / JCM 12380 / KOD1) (Pyrococcus kodakaraensis (strain KOD1))).